Reading from the N-terminus, the 116-residue chain is NADH-quinone oxidoreductase subunit A (116 aa).

The next 3 helical transmembrane spans lie at 3–23 (FTFLVVVLLTALAFVGVVIAL), 61–81 (FAILFLMFDVETAFLFPWAVV), and 88–108 (QGLVSILFFFIILVLGLAYAW).

Belongs to the complex I subunit 3 family. In terms of assembly, NDH-1 is composed of 14 different subunits. Subunits NuoA, H, J, K, L, M, N constitute the membrane sector of the complex.

Its subcellular location is the cell inner membrane. The enzyme catalyses a quinone + NADH + 5 H(+)(in) = a quinol + NAD(+) + 4 H(+)(out). NDH-1 shuttles electrons from NADH, via FMN and iron-sulfur (Fe-S) centers, to quinones in the respiratory chain. The immediate electron acceptor for the enzyme in this species is believed to be a menaquinone. Couples the redox reaction to proton translocation (for every two electrons transferred, four hydrogen ions are translocated across the cytoplasmic membrane), and thus conserves the redox energy in a proton gradient. This Bacteroides thetaiotaomicron (strain ATCC 29148 / DSM 2079 / JCM 5827 / CCUG 10774 / NCTC 10582 / VPI-5482 / E50) protein is NADH-quinone oxidoreductase subunit A.